The chain runs to 264 residues: Neuferricin (264 aa).

Residues 1 to 22 (MLRCGGRGLLLGLAVAAAAVMA) form the signal peptide. In terms of domain architecture, Cytochrome b5 heme-binding spans 35–134 (FRLFIPEELS…KNYVCVGRVT (100 aa)).

This sequence belongs to the cytochrome b5 family. MAPR subfamily.

It is found in the secreted. Functionally, heme-binding protein which promotes neuronal but not astrocyte differentiation. The polypeptide is Neuferricin (Homo sapiens (Human)).